The sequence spans 147 residues: Deoxyuridine 5'-triphosphate nucleotidohydrolase (147 aa).

Substrate-binding positions include 63–65 (RSG), N76, and 80–82 (TID).

This sequence belongs to the dUTPase family. It depends on Mg(2+) as a cofactor.

It carries out the reaction dUTP + H2O = dUMP + diphosphate + H(+). The protein operates within pyrimidine metabolism; dUMP biosynthesis; dUMP from dCTP (dUTP route): step 2/2. This enzyme is involved in nucleotide metabolism: it produces dUMP, the immediate precursor of thymidine nucleotides and it decreases the intracellular concentration of dUTP so that uracil cannot be incorporated into DNA. The chain is Deoxyuridine 5'-triphosphate nucleotidohydrolase from Chlamydia abortus (strain DSM 27085 / S26/3) (Chlamydophila abortus).